The following is a 157-amino-acid chain: Probable calcium-binding protein CML23 (157 aa).

EF-hand domains are found at residues 11 to 46 (GSME…LSPN), 47 to 82 (ASQE…SDQS), 86 to 121 (SAIR…LGEK), and 122 to 157 (CSIQ…NGSA). The Ca(2+) site is built by Asp24, Asn26, Asp28, Lys30, Glu35, Asp60, Asp62, Asn64, Glu71, Asp99, Asp101, Asn103, Arg105, Glu110, Asp135, Asp137, Asp139, Cys141, and Glu146.

Functionally, potential calcium sensor. This Arabidopsis thaliana (Mouse-ear cress) protein is Probable calcium-binding protein CML23 (CML23).